Reading from the N-terminus, the 306-residue chain is MAVDSKIVVSCTSRLFTDEVCKLQEKVGCIVPLRDSHGSQNLQTVGLKPALGIDLGSDYVLMCNYLSTCTLAILEEVTTDSLVLTKISRNGTYQIKNKYHPFFQWDSNIQVCVMPPLFDQESNSVDLQSNNFTLLLPIVVPCEVAHEALQKVLTYNIYLRVTQAEPNAARMADVLAQTNYVTYLGNHYSLNLEGMESLGALAFLDNLATYLCIMVGLLPRACVRLLTTLLRHGENELLNVFRRMIPDEFNAAAANLNADTVYPDMTKIGLLITYLQTLGSIFNLSPRLQVSTYTPENLSATCWYVC.

Belongs to the herpesviridae TRX2 protein family. In terms of assembly, interacts with TRX1 and major capisd protein/MCP.

The protein localises to the virion. Its subcellular location is the host nucleus. Its function is as follows. Structural component of the T=16 icosahedral capsid. The capsid is composed of pentamers and hexamers of major capsid protein/MCP, which are linked together by heterotrimers called triplexes. These triplexes are formed by a single molecule of triplex protein 1/TRX1 and two copies of triplex protein 2/TRX2. Additionally, TRX1 is required for efficient transport of TRX2 to the nucleus, which is the site of capsid assembly. The protein is Triplex capsid protein 2 of Alcelaphine herpesvirus 1 (strain C500) (AlHV-1).